The primary structure comprises 446 residues: Keratin, type I cytoskeletal 25 (446 aa).

Residues 1-74 (MSLRLSSGSR…VNEGGLLSGN (74 aa)) form a head region. The tract at residues 75-110 (EKVTMQNLNDRLASYLDNVQALQEANADLEQKIKGW) is coil 1A. In terms of domain architecture, IF rod spans 75–390 (EKVTMQNLND…LLIGGDEGAC (316 aa)). A linker 1 region spans residues 111–132 (YEKFGPGSCRGLDHDYSRYFPI). The segment at 133-224 (IDDLKNQIIT…KNHKEEMQAL (92 aa)) is coil 1B. A linker 12 region spans residues 225 to 247 (QCAAGGNVNVEMNAAPGVDLTVL). The interval 248–386 (LNNMRAEYEA…ETYCLLIGGD (139 aa)) is coil 2. Residues 387–446 (EGACKSSSYKSKDYGSGNAGNQIKDPVKAIVVKKVLEEVDQRSKILTTRLHSLEEKSQSN) form a tail region. Ser-438 bears the Phosphoserine mark.

Belongs to the intermediate filament family. In terms of assembly, heterodimer of a type I and a type II keratin. Heterodimer with type II keratin KRT5 leading to the formation of keratin intermediate filament (KIF) network. Interacts with KRT6A to form filaments.

Its subcellular location is the cytoplasm. In terms of biological role, essential for the proper assembly of type I and type II keratin protein complexes and formation of keratin intermediate filaments in the inner root sheath (irs). Plays a role in the cytoskeleton organization. The chain is Keratin, type I cytoskeletal 25 from Mus musculus (Mouse).